The sequence spans 602 residues: Adenylosuccinate synthetase (602 aa).

GTP-binding positions include 74–80 and 104–106; these read GDEGKGK and GHT. The active-site Proton acceptor is Asp75. Residues Asp75 and Gly104 each coordinate Mg(2+). IMP-binding positions include 75-78, 102-105, Thr189, Lys203, Gln315, Thr331, and Lys459; these read DEGK and NAGH. The Proton donor role is filled by His105. Position 455-461 (455-461) interacts with substrate; sequence AVTKKPR. Residues Arg461 and 589–591 each bind GTP; that span reads GNG.

The protein belongs to the adenylosuccinate synthetase family. Homodimer. Mg(2+) serves as cofactor.

The protein resides in the cytoplasm. It carries out the reaction IMP + L-aspartate + GTP = N(6)-(1,2-dicarboxyethyl)-AMP + GDP + phosphate + 2 H(+). It participates in purine metabolism; AMP biosynthesis via de novo pathway; AMP from IMP: step 1/2. Functionally, plays an important role in the salvage pathway for purine nucleotide biosynthesis. Catalyzes the first committed step in the biosynthesis of AMP from IMP. The protein is Adenylosuccinate synthetase of Trypanosoma brucei brucei (strain 927/4 GUTat10.1).